An 86-amino-acid chain; its full sequence is Small ribosomal subunit protein bS16 (86 aa).

The protein belongs to the bacterial ribosomal protein bS16 family.

The chain is Small ribosomal subunit protein bS16 from Borrelia garinii subsp. bavariensis (strain ATCC BAA-2496 / DSM 23469 / PBi) (Borreliella bavariensis).